A 350-amino-acid polypeptide reads, in one-letter code: Peroxidase 24 (350 aa).

Positions 1-27 are cleaved as a signal peptide; it reads MANKSLEIRFLFPLVLFLVVKLLCVDG. Intrachain disulfides connect Cys55–Cys135, Cys88–Cys93, Cys141–Cys346, and Cys221–Cys253. A glycan (N-linked (GlcNAc...) asparagine) is linked at Asn73. His86 functions as the Proton acceptor in the catalytic mechanism. Residues Asp87, Val90, Gly92, Asp94, and Ser96 each contribute to the Ca(2+) site. Residue Pro184 participates in substrate binding. The N-linked (GlcNAc...) asparagine glycan is linked to Asn189. Heme b is bound at residue His214. Thr215 contacts Ca(2+). N-linked (GlcNAc...) asparagine glycosylation is present at Asn230. Ca(2+)-binding residues include Asp269 and Asp277.

Belongs to the peroxidase family. Classical plant (class III) peroxidase subfamily. The cofactor is heme b. Ca(2+) serves as cofactor.

It is found in the secreted. The enzyme catalyses 2 a phenolic donor + H2O2 = 2 a phenolic radical donor + 2 H2O. Functionally, removal of H(2)O(2), oxidation of toxic reductants, biosynthesis and degradation of lignin, suberization, auxin catabolism, response to environmental stresses such as wounding, pathogen attack and oxidative stress. These functions might be dependent on each isozyme/isoform in each plant tissue. This chain is Peroxidase 24 (PER24), found in Arabidopsis thaliana (Mouse-ear cress).